Reading from the N-terminus, the 63-residue chain is uncharacterized protein (63 aa).

Residues 35–63 (PKPDSLISEHPTAQEAMDAKKRYEDPDKE) form a disordered region. Residues 51-63 (MDAKKRYEDPDKE) are compositionally biased toward basic and acidic residues.

This is an uncharacterized protein from Escherichia coli O157:H7.